The chain runs to 268 residues: Probable 6-phosphogluconolactonase 1 (268 aa).

Belongs to the glucosamine/galactosamine-6-phosphate isomerase family. 6-phosphogluconolactonase subfamily.

Its subcellular location is the cytoplasm. It is found in the cytosol. The enzyme catalyses 6-phospho-D-glucono-1,5-lactone + H2O = 6-phospho-D-gluconate + H(+). It functions in the pathway carbohydrate degradation; pentose phosphate pathway; D-ribulose 5-phosphate from D-glucose 6-phosphate (oxidative stage): step 2/3. Functionally, catalyzes the hydrolysis of 6-phosphogluconolactone to 6-phosphogluconate. The protein is Probable 6-phosphogluconolactonase 1 of Arabidopsis thaliana (Mouse-ear cress).